A 304-amino-acid polypeptide reads, in one-letter code: Putative dihydroorotate dehydrogenase A (fumarate) (304 aa).

FMN-binding positions include S21 and 45–46 (KS). Residues K45, 69–73 (NAVGL), and N129 each bind substrate. N129 is an FMN binding site. The active-site Nucleophile is C132. FMN is bound by residues K168 and I194. 195 to 196 (NT) contacts substrate. Residues G220, 246-247 (GG), and 268-269 (GS) contribute to the FMN site.

Belongs to the dihydroorotate dehydrogenase family. Type 1 subfamily. As to quaternary structure, homodimer. Requires FMN as cofactor.

Its subcellular location is the cytoplasm. It carries out the reaction (S)-dihydroorotate + fumarate = orotate + succinate. It functions in the pathway pyrimidine metabolism; UMP biosynthesis via de novo pathway. In terms of biological role, catalyzes the conversion of dihydroorotate to orotate with fumarate as the electron acceptor. The polypeptide is Putative dihydroorotate dehydrogenase A (fumarate) (pyrD) (Pediococcus pentosaceus (strain ATCC 25745 / CCUG 21536 / LMG 10740 / 183-1w)).